The following is a 554-amino-acid chain: Phenylalanine--tRNA ligase beta subunit (554 aa).

In terms of domain architecture, B5 spans 276 to 351 (LTPKSRMISV…INYGYEKFEG (76 aa)). 4 residues coordinate Mg(2+): aspartate 329, aspartate 335, glutamate 338, and glutamate 339.

Belongs to the phenylalanyl-tRNA synthetase beta subunit family. Type 2 subfamily. As to quaternary structure, tetramer of two alpha and two beta subunits. It depends on Mg(2+) as a cofactor.

Its subcellular location is the cytoplasm. It carries out the reaction tRNA(Phe) + L-phenylalanine + ATP = L-phenylalanyl-tRNA(Phe) + AMP + diphosphate + H(+). In Methanococcus maripaludis (strain C6 / ATCC BAA-1332), this protein is Phenylalanine--tRNA ligase beta subunit.